The following is a 60-amino-acid chain: Large ribosomal subunit protein bL32 (60 aa).

Residues 1–21 form a disordered region; sequence MAVPRNRHSNARKNIRRSHDA.

This sequence belongs to the bacterial ribosomal protein bL32 family.

The protein is Large ribosomal subunit protein bL32 of Chlamydia felis (strain Fe/C-56) (Chlamydophila felis).